A 378-amino-acid polypeptide reads, in one-letter code: Dual-specificity RNA methyltransferase RlmN (378 aa).

Glu96 serves as the catalytic Proton acceptor. Residues 102-342 (QGGRGTLCVS…VRTTRGDDID (241 aa)) enclose the Radical SAM core domain. An intrachain disulfide couples Cys109 to Cys345. Positions 116, 120, and 123 each coordinate [4Fe-4S] cluster. Residues 170 to 171 (GE), Ser202, 224 to 226 (SLH), and Asn302 each bind S-adenosyl-L-methionine. Cys345 functions as the S-methylcysteine intermediate in the catalytic mechanism.

Belongs to the radical SAM superfamily. RlmN family. The cofactor is [4Fe-4S] cluster.

It is found in the cytoplasm. The catalysed reaction is adenosine(2503) in 23S rRNA + 2 reduced [2Fe-2S]-[ferredoxin] + 2 S-adenosyl-L-methionine = 2-methyladenosine(2503) in 23S rRNA + 5'-deoxyadenosine + L-methionine + 2 oxidized [2Fe-2S]-[ferredoxin] + S-adenosyl-L-homocysteine. The enzyme catalyses adenosine(37) in tRNA + 2 reduced [2Fe-2S]-[ferredoxin] + 2 S-adenosyl-L-methionine = 2-methyladenosine(37) in tRNA + 5'-deoxyadenosine + L-methionine + 2 oxidized [2Fe-2S]-[ferredoxin] + S-adenosyl-L-homocysteine. Specifically methylates position 2 of adenine 2503 in 23S rRNA and position 2 of adenine 37 in tRNAs. m2A2503 modification seems to play a crucial role in the proofreading step occurring at the peptidyl transferase center and thus would serve to optimize ribosomal fidelity. In Pseudomonas paraeruginosa (strain DSM 24068 / PA7) (Pseudomonas aeruginosa (strain PA7)), this protein is Dual-specificity RNA methyltransferase RlmN.